An 83-amino-acid chain; its full sequence is Exodeoxyribonuclease 7 small subunit (83 aa).

Belongs to the XseB family. Heterooligomer composed of large and small subunits.

Its subcellular location is the cytoplasm. It carries out the reaction Exonucleolytic cleavage in either 5'- to 3'- or 3'- to 5'-direction to yield nucleoside 5'-phosphates.. Functionally, bidirectionally degrades single-stranded DNA into large acid-insoluble oligonucleotides, which are then degraded further into small acid-soluble oligonucleotides. This Rhizobium meliloti (strain 1021) (Ensifer meliloti) protein is Exodeoxyribonuclease 7 small subunit.